The chain runs to 435 residues: Chaperone SurA (435 aa).

The first 29 residues, 1-29 (MINKTLHTKHTLLGLLAMAVLMIPVWSQA), serve as a signal peptide directing secretion. PpiC domains are found at residues 180–281 (QEDF…KMID) and 290–390 (VTQY…RVDD).

Its subcellular location is the periplasm. The enzyme catalyses [protein]-peptidylproline (omega=180) = [protein]-peptidylproline (omega=0). Its function is as follows. Chaperone involved in the correct folding and assembly of outer membrane proteins. Recognizes specific patterns of aromatic residues and the orientation of their side chains, which are found more frequently in integral outer membrane proteins. May act in both early periplasmic and late outer membrane-associated steps of protein maturation. The sequence is that of Chaperone SurA from Alcanivorax borkumensis (strain ATCC 700651 / DSM 11573 / NCIMB 13689 / SK2).